Consider the following 354-residue polypeptide: Pyruvate dehydrogenase E1 component subunit alpha (354 aa).

The segment at M1 to P29 is disordered.

In terms of assembly, heterodimer of an alpha and a beta chain. It depends on thiamine diphosphate as a cofactor.

The catalysed reaction is N(6)-[(R)-lipoyl]-L-lysyl-[protein] + pyruvate + H(+) = N(6)-[(R)-S(8)-acetyldihydrolipoyl]-L-lysyl-[protein] + CO2. In terms of biological role, the pyruvate dehydrogenase complex catalyzes the overall conversion of pyruvate to acetyl-CoA and CO(2). It contains multiple copies of three enzymatic components: pyruvate dehydrogenase (E1), dihydrolipoamide acetyltransferase (E2) and lipoamide dehydrogenase (E3). This chain is Pyruvate dehydrogenase E1 component subunit alpha (pdhA), found in Zymomonas mobilis subsp. mobilis (strain ATCC 31821 / ZM4 / CP4).